We begin with the raw amino-acid sequence, 309 residues long: tRNA dimethylallyltransferase (309 aa).

Residue glycine 9–threonine 16 participates in ATP binding. Threonine 11–threonine 16 is a binding site for substrate. Residues aspartate 34 to glutamine 37 are interaction with substrate tRNA.

It belongs to the IPP transferase family. In terms of assembly, monomer. Mg(2+) serves as cofactor.

It catalyses the reaction adenosine(37) in tRNA + dimethylallyl diphosphate = N(6)-dimethylallyladenosine(37) in tRNA + diphosphate. In terms of biological role, catalyzes the transfer of a dimethylallyl group onto the adenine at position 37 in tRNAs that read codons beginning with uridine, leading to the formation of N6-(dimethylallyl)adenosine (i(6)A). This Clostridium kluyveri (strain NBRC 12016) protein is tRNA dimethylallyltransferase.